The primary structure comprises 288 residues: Polyamine aminopropyltransferase (288 aa).

Residues E9–D238 enclose the PABS domain. Q33 is an S-methyl-5'-thioadenosine binding site. Residues H64 and D88 each contribute to the spermidine site. S-methyl-5'-thioadenosine-binding positions include E108 and D140–G141. D158 functions as the Proton acceptor in the catalytic mechanism. Spermidine is bound at residue D158–D161. Residue P165 participates in S-methyl-5'-thioadenosine binding.

This sequence belongs to the spermidine/spermine synthase family. In terms of assembly, homodimer or homotetramer.

The protein localises to the cytoplasm. It carries out the reaction S-adenosyl 3-(methylsulfanyl)propylamine + putrescine = S-methyl-5'-thioadenosine + spermidine + H(+). It functions in the pathway amine and polyamine biosynthesis; spermidine biosynthesis; spermidine from putrescine: step 1/1. In terms of biological role, catalyzes the irreversible transfer of a propylamine group from the amino donor S-adenosylmethioninamine (decarboxy-AdoMet) to putrescine (1,4-diaminobutane) to yield spermidine. This is Polyamine aminopropyltransferase from Shigella dysenteriae serotype 1 (strain Sd197).